The following is a 177-amino-acid chain: Large ribosomal subunit protein uL6 (177 aa).

Belongs to the universal ribosomal protein uL6 family. In terms of assembly, part of the 50S ribosomal subunit.

Its function is as follows. This protein binds to the 23S rRNA, and is important in its secondary structure. It is located near the subunit interface in the base of the L7/L12 stalk, and near the tRNA binding site of the peptidyltransferase center. This Brucella canis (strain ATCC 23365 / NCTC 10854 / RM-666) protein is Large ribosomal subunit protein uL6.